Here is an 86-residue protein sequence, read N- to C-terminus: Cell division topological specificity factor (86 aa).

It belongs to the MinE family.

Prevents the cell division inhibition by proteins MinC and MinD at internal division sites while permitting inhibition at polar sites. This ensures cell division at the proper site by restricting the formation of a division septum at the midpoint of the long axis of the cell. In Azoarcus sp. (strain BH72), this protein is Cell division topological specificity factor.